We begin with the raw amino-acid sequence, 122 residues long: Large ribosomal subunit protein uL14 (122 aa).

This sequence belongs to the universal ribosomal protein uL14 family. As to quaternary structure, part of the 50S ribosomal subunit. Forms a cluster with proteins L3 and L19. In the 70S ribosome, L14 and L19 interact and together make contacts with the 16S rRNA in bridges B5 and B8.

Binds to 23S rRNA. Forms part of two intersubunit bridges in the 70S ribosome. This chain is Large ribosomal subunit protein uL14, found in Orientia tsutsugamushi (strain Boryong) (Rickettsia tsutsugamushi).